Here is a 133-residue protein sequence, read N- to C-terminus: Glycine cleavage system H protein (133 aa).

Residues 24–106 (IATIGISAYA…YGDGWLLKVR (83 aa)) enclose the Lipoyl-binding domain. At lysine 65 the chain carries N6-lipoyllysine.

Belongs to the GcvH family. As to quaternary structure, the glycine cleavage system is composed of four proteins: P, T, L and H. It depends on (R)-lipoate as a cofactor.

In terms of biological role, the glycine cleavage system catalyzes the degradation of glycine. The H protein shuttles the methylamine group of glycine from the P protein to the T protein. The protein is Glycine cleavage system H protein of Crocosphaera subtropica (strain ATCC 51142 / BH68) (Cyanothece sp. (strain ATCC 51142)).